A 21-amino-acid polypeptide reads, in one-letter code: Fibrinogen beta chain (21 aa).

Gln-1 is modified (pyrrolidone carboxylic acid). A compositionally biased stretch (acidic residues) spans Gln-1 to Gln-10. The tract at residues Gln-1 to Arg-21 is disordered. Residue Thr-4 is glycosylated (O-linked (GalNAc...) threonine). Residue Tyr-6 is modified to Sulfotyrosine.

As to quaternary structure, heterohexamer; disulfide linked. Contains 2 sets of 3 non-identical chains (alpha, beta and gamma). The 2 heterotrimers are in head to head conformation with the N-termini in a small central domain. Conversion of fibrinogen to fibrin is triggered by thrombin, which cleaves fibrinopeptides A and B from alpha and beta chains, and thus exposes the N-terminal polymerization sites responsible for the formation of the soft clot.

The protein localises to the secreted. Cleaved by the protease thrombin to yield monomers which, together with fibrinogen alpha (FGA) and fibrinogen gamma (FGG), polymerize to form an insoluble fibrin matrix. Fibrin has a major function in hemostasis as one of the primary components of blood clots. In addition, functions during the early stages of wound repair to stabilize the lesion and guide cell migration during re-epithelialization. Was originally thought to be essential for platelet aggregation, based on in vitro studies using anticoagulated blood. However subsequent studies have shown that it is not absolutely required for thrombus formation in vivo. Enhances expression of SELP in activated platelets. Maternal fibrinogen is essential for successful pregnancy. Fibrin deposition is also associated with infection, where it protects against IFNG-mediated hemorrhage. May also facilitate the antibacterial immune response via both innate and T-cell mediated pathways. This Bubalus bubalis (Domestic water buffalo) protein is Fibrinogen beta chain (FGB).